The primary structure comprises 563 residues: Serine palmitoyltransferase 3 (563 aa).

Polar residues predominate over residues 1-29; the sequence is MANLNDSAVTNGTLHNPKTQQGKRQSTGC. Residues 1–32 form a disordered region; the sequence is MANLNDSAVTNGTLHNPKTQQGKRQSTGCVKN. The chain crosses the membrane as a helical span at residues 59-79; sequence PLYVYVLTYMGYGIGILFGYL. Lys-371 bears the N6-(pyridoxal phosphate)lysine mark.

The protein belongs to the class-II pyridoxal-phosphate-dependent aminotransferase family. Component of the serine palmitoyltransferase (SPT) complex, which is composed of SPTLC1, SPTLC2 or SPTLC3 and SPTSSA or SPTSSB. The heterodimer consisting of SPTLC1 and SPTLC2/SPTLC3 forms the catalytic core of the enzyme, while SPTSSA or SPTSSB subunits determine substrate specificity. SPT also interacts with ORMDL proteins, especially ORMDL3, which negatively regulate SPT activity in the presence of ceramides. It depends on pyridoxal 5'-phosphate as a cofactor. In terms of tissue distribution, expressed in white and brown adipose tissues.

It localises to the endoplasmic reticulum membrane. The catalysed reaction is L-serine + hexadecanoyl-CoA + H(+) = 3-oxosphinganine + CO2 + CoA. The enzyme catalyses dodecanoyl-CoA + L-serine + H(+) = 3-oxotetradecasphinganine + CO2 + CoA. It catalyses the reaction tetradecanoyl-CoA + L-serine + H(+) = 3-oxohexadecasphinganine + CO2 + CoA. It carries out the reaction octadecanoyl-CoA + L-serine + H(+) = 3-oxoeicosasphinganine + CO2 + CoA. It functions in the pathway lipid metabolism; sphingolipid metabolism. SPT complex catalytic activity is negatively regulated by ORMDL proteins, including ORMDL3, in the presence of ceramides. This mechanism allows to maintain ceramide levels at sufficient concentrations for the production of complex sphingolipids, but which prevents the accumulation of ceramides to levels that trigger apoptosis. Its function is as follows. Component of the serine palmitoyltransferase multisubunit enzyme (SPT) that catalyzes the initial and rate-limiting step in sphingolipid biosynthesis by condensing L-serine and activated acyl-CoA (most commonly palmitoyl-CoA) to form long-chain bases. The SPT complex is composed of SPTLC1, SPTLC2 or SPTLC3 and SPTSSA or SPTSSB. Within this complex, the heterodimer consisting of SPTLC1 and SPTLC2/SPTLC3 forms the catalytic core. The composition of the serine palmitoyltransferase (SPT) complex determines the substrate preference. The SPTLC1-SPTLC2-SPTSSA complex shows a strong preference for C16-CoA substrate, while the SPTLC1-SPTLC3-SPTSSA isozyme uses both C14-CoA and C16-CoA as substrates, with a slight preference for C14-CoA. The SPTLC1-SPTLC2-SPTSSB complex shows a strong preference for C18-CoA substrate, while the SPTLC1-SPTLC3-SPTSSB isozyme displays an ability to use a broader range of acyl-CoAs, without apparent preference. The sequence is that of Serine palmitoyltransferase 3 from Mus musculus (Mouse).